The sequence spans 82 residues: ATP synthase subunit c, chloroplastic (82 aa).

2 helical membrane-spanning segments follow: residues 3-23 and 57-77; these read PIVA…AAIG and FAFM…LLFA.

It belongs to the ATPase C chain family. F-type ATPases have 2 components, F(1) - the catalytic core - and F(0) - the membrane proton channel. F(1) has five subunits: alpha(3), beta(3), gamma(1), delta(1), epsilon(1). F(0) has four main subunits: a(1), b(1), b'(1) and c(10-14). The alpha and beta chains form an alternating ring which encloses part of the gamma chain. F(1) is attached to F(0) by a central stalk formed by the gamma and epsilon chains, while a peripheral stalk is formed by the delta, b and b' chains.

It localises to the plastid. The protein localises to the chloroplast thylakoid membrane. F(1)F(0) ATP synthase produces ATP from ADP in the presence of a proton or sodium gradient. F-type ATPases consist of two structural domains, F(1) containing the extramembraneous catalytic core and F(0) containing the membrane proton channel, linked together by a central stalk and a peripheral stalk. During catalysis, ATP synthesis in the catalytic domain of F(1) is coupled via a rotary mechanism of the central stalk subunits to proton translocation. Its function is as follows. Key component of the F(0) channel; it plays a direct role in translocation across the membrane. A homomeric c-ring of between 10-14 subunits forms the central stalk rotor element with the F(1) delta and epsilon subunits. In Tetradesmus obliquus (Green alga), this protein is ATP synthase subunit c, chloroplastic.